We begin with the raw amino-acid sequence, 361 residues long: DNA replication and repair protein RecF (361 aa).

30–37 (GQNAQGKT) is an ATP binding site.

This sequence belongs to the RecF family.

The protein resides in the cytoplasm. The RecF protein is involved in DNA metabolism; it is required for DNA replication and normal SOS inducibility. RecF binds preferentially to single-stranded, linear DNA. It also seems to bind ATP. The sequence is that of DNA replication and repair protein RecF from Streptococcus gordonii (strain Challis / ATCC 35105 / BCRC 15272 / CH1 / DL1 / V288).